Reading from the N-terminus, the 250-residue chain is DNA repair protein RecO (250 aa).

Belongs to the RecO family.

In terms of biological role, involved in DNA repair and RecF pathway recombination. This is DNA repair protein RecO from Staphylococcus aureus (strain MRSA252).